The primary structure comprises 297 residues: ATP synthase gamma chain (297 aa).

Belongs to the ATPase gamma chain family. As to quaternary structure, F-type ATPases have 2 components, CF(1) - the catalytic core - and CF(0) - the membrane proton channel. CF(1) has five subunits: alpha(3), beta(3), gamma(1), delta(1), epsilon(1). CF(0) has three main subunits: a, b and c.

It is found in the cell membrane. Produces ATP from ADP in the presence of a proton gradient across the membrane. The gamma chain is believed to be important in regulating ATPase activity and the flow of protons through the CF(0) complex. This chain is ATP synthase gamma chain, found in Renibacterium salmoninarum (strain ATCC 33209 / DSM 20767 / JCM 11484 / NBRC 15589 / NCIMB 2235).